We begin with the raw amino-acid sequence, 498 residues long: L-proline--[L-prolyl-carrier protein] ligase (498 aa).

This sequence belongs to the ATP-dependent AMP-binding enzyme family.

The catalysed reaction is holo-[peptidyl-carrier protein] + L-proline + ATP = L-prolyl-[peptidyl-carrier protein] + AMP + diphosphate. Its function is as follows. Involved in the biosynthesis of pyoluteorin. Catalyzes the conversion of L-proline to L-prolyl-AMP and the transfer of the L-prolyl group to acyl carrier protein PltL. This Pseudomonas fluorescens (strain ATCC BAA-477 / NRRL B-23932 / Pf-5) protein is L-proline--[L-prolyl-carrier protein] ligase.